Reading from the N-terminus, the 900-residue chain is 3'-5' exonuclease DinG (900 aa).

The region spanning 8–161 (VVDLETTGNQ…DEDAATTAQL (154 aa)) is the Exonuclease domain. In terms of domain architecture, Helicase ATP-binding spans 241–496 (TLVTKELGLT…KSIDLLEQQR (256 aa)). Position 276-283 (276-283 (APLGSGKS)) interacts with ATP. The short motif at 448–451 (DEAH) is the DEAH box element. In terms of domain architecture, Helicase C-terminal spans 714–883 (YVIEYVSVVE…RYRQKKGDIK (170 aa)).

Belongs to the helicase family. DinG subfamily. Type 2 sub-subfamily.

3'-5' exonuclease. This chain is 3'-5' exonuclease DinG, found in Staphylococcus saprophyticus subsp. saprophyticus (strain ATCC 15305 / DSM 20229 / NCIMB 8711 / NCTC 7292 / S-41).